Consider the following 251-residue polypeptide: MALPEFSMRQLLEAGVHYGHQTARWNPKMAEFIYGDRNGIHIVDLTQTVPMLDQALKVVRDTVAKGGRILFVGTKRQAQKPIAEAAEKCAQHYMNHRWLGGTLTNWKTVSQSIQRLKQLDEVLATGAEGLTKKERLNMEREQQKLQASLGGIREMGGTPDLLFIIDVGKEDLAIAEAQKLGIPVVAVVDTNNSPKGVDYVIPGNDDAARAIALYCDLVSRAALDGMSAQMGAAGIDLGALDVAPEEETLEA.

This sequence belongs to the universal ribosomal protein uS2 family.

The polypeptide is Small ribosomal subunit protein uS2 (Cereibacter sphaeroides (strain ATCC 17029 / ATH 2.4.9) (Rhodobacter sphaeroides)).